The following is a 402-amino-acid chain: Succinylornithine transaminase (402 aa).

The residue at position 252 (Lys-252) is an N6-(pyridoxal phosphate)lysine.

The protein belongs to the class-III pyridoxal-phosphate-dependent aminotransferase family. AstC subfamily. Requires pyridoxal 5'-phosphate as cofactor.

The enzyme catalyses N(2)-succinyl-L-ornithine + 2-oxoglutarate = N-succinyl-L-glutamate 5-semialdehyde + L-glutamate. The protein operates within amino-acid degradation; L-arginine degradation via AST pathway; L-glutamate and succinate from L-arginine: step 3/5. In terms of biological role, catalyzes the transamination of N(2)-succinylornithine and alpha-ketoglutarate into N(2)-succinylglutamate semialdehyde and glutamate. Can also act as an acetylornithine aminotransferase. The chain is Succinylornithine transaminase from Photorhabdus laumondii subsp. laumondii (strain DSM 15139 / CIP 105565 / TT01) (Photorhabdus luminescens subsp. laumondii).